A 471-amino-acid chain; its full sequence is N-succinylglutamate 5-semialdehyde dehydrogenase (471 aa).

207–212 is an NAD(+) binding site; the sequence is GSAHAG. Active-site residues include Glu-230 and Cys-264.

This sequence belongs to the aldehyde dehydrogenase family. AstD subfamily.

The catalysed reaction is N-succinyl-L-glutamate 5-semialdehyde + NAD(+) + H2O = N-succinyl-L-glutamate + NADH + 2 H(+). The protein operates within amino-acid degradation; L-arginine degradation via AST pathway; L-glutamate and succinate from L-arginine: step 4/5. In terms of biological role, catalyzes the NAD-dependent reduction of succinylglutamate semialdehyde into succinylglutamate. This Novosphingobium aromaticivorans (strain ATCC 700278 / DSM 12444 / CCUG 56034 / CIP 105152 / NBRC 16084 / F199) protein is N-succinylglutamate 5-semialdehyde dehydrogenase.